The chain runs to 396 residues: Flavohemoprotein (396 aa).

The Globin domain maps to 1–136 (MLDAQTIATV…LANVFINREA (136 aa)). H85 is a binding site for heme b. Residues Y95 and E135 each act as charge relay system in the active site. Positions 147-396 (GGWEGTRDFR…YECFGPHKVL (250 aa)) are reductase. The FAD-binding FR-type domain occupies 150-255 (EGTRDFRIVA…VAPAGDFFMA (106 aa)). Residues Y188 and 204 to 207 (RQYS) contribute to the FAD site. 268-273 (GVGQTP) is an NADP(+) binding site. Residue 389-392 (CFGP) participates in FAD binding.

This sequence belongs to the globin family. Two-domain flavohemoproteins subfamily. It in the C-terminal section; belongs to the flavoprotein pyridine nucleotide cytochrome reductase family. Requires heme b as cofactor. FAD is required as a cofactor.

The catalysed reaction is 2 nitric oxide + NADPH + 2 O2 = 2 nitrate + NADP(+) + H(+). It carries out the reaction 2 nitric oxide + NADH + 2 O2 = 2 nitrate + NAD(+) + H(+). In terms of biological role, is involved in NO detoxification in an aerobic process, termed nitric oxide dioxygenase (NOD) reaction that utilizes O(2) and NAD(P)H to convert NO to nitrate, which protects the bacterium from various noxious nitrogen compounds. Therefore, plays a central role in the inducible response to nitrosative stress. In Escherichia coli O6:H1 (strain CFT073 / ATCC 700928 / UPEC), this protein is Flavohemoprotein.